The primary structure comprises 546 residues: Chaperonin GroEL (546 aa).

Residues Thr-30–Pro-33, Lys-51, Asp-87–Thr-91, Gly-415, Asn-479–Ala-481, and Asp-495 contribute to the ATP site.

It belongs to the chaperonin (HSP60) family. Forms a cylinder of 14 subunits composed of two heptameric rings stacked back-to-back. Interacts with the co-chaperonin GroES.

Its subcellular location is the cytoplasm. It catalyses the reaction ATP + H2O + a folded polypeptide = ADP + phosphate + an unfolded polypeptide.. In terms of biological role, together with its co-chaperonin GroES, plays an essential role in assisting protein folding. The GroEL-GroES system forms a nano-cage that allows encapsulation of the non-native substrate proteins and provides a physical environment optimized to promote and accelerate protein folding. In Xanthomonas axonopodis pv. citri (strain 306), this protein is Chaperonin GroEL.